The primary structure comprises 321 residues: Cytochrome c biogenesis protein CcsA (321 aa).

Helical transmembrane passes span 1 to 21 (MIFITLEHILAHISFSLISVV), 36 to 56 (LSSSGGKGMIVTFVCTTGLLI), 70 to 90 (LYESFMFLSWSSSVIHIILEV), 97 to 117 (GLGAITAPSTMLTHGFATSGL), 143 to 163 (ILLSYATLLCGSLSSIAFLII), 229 to 249 (VIGLGFLLLTIGILSGAVWAN), 256 to 276 (WSWDPKETWALITWIIFAIYL), and 290 to 310 (AIIASLGSFIVWICYLGVDLL).

The protein belongs to the CcmF/CycK/Ccl1/NrfE/CcsA family. May interact with Ccs1.

It localises to the plastid. The protein resides in the chloroplast thylakoid membrane. In terms of biological role, required during biogenesis of c-type cytochromes (cytochrome c6 and cytochrome f) at the step of heme attachment. This chain is Cytochrome c biogenesis protein CcsA, found in Cycas taitungensis (Prince sago).